We begin with the raw amino-acid sequence, 327 residues long: 4-hydroxy-2-oxoglutarate aldolase, mitochondrial (327 aa).

The N-terminal 25 residues, 1-25, are a transit peptide targeting the mitochondrion; sequence MLVPRVWSSVRLGLSRVLSRTLRGW. 77–78 is a binding site for substrate; that stretch reads SN. Lys-196 acts as the Schiff-base intermediate with substrate in catalysis. The substrate site is built by Ser-198 and Gly-222.

It belongs to the DapA family. As to quaternary structure, homotetramer.

It localises to the mitochondrion. It carries out the reaction (4S)-4-hydroxy-2-oxoglutarate = glyoxylate + pyruvate. The catalysed reaction is (4R)-4-hydroxy-2-oxoglutarate = glyoxylate + pyruvate. Inhibited by divalent cations. Its function is as follows. Catalyzes the final step in the metabolic pathway of hydroxyproline. The chain is 4-hydroxy-2-oxoglutarate aldolase, mitochondrial (HOGA1) from Bos taurus (Bovine).